We begin with the raw amino-acid sequence, 720 residues long: Secreted RxLR effector protein 138 (720 aa).

The N-terminal stretch at 1-20 (MRSAFYVAIVLLVAAGSQTA) is a signal peptide. The RxLR-dEER signature appears at 56–71 (RNLKDDFMFSAGDEER). Residues 264 to 335 (ESNTRKRNNV…VAPPEPSRLD (72 aa)) form a disordered region. Positions 320-335 (KQHDHRVAPPEPSRLD) are enriched in basic and acidic residues. N-linked (GlcNAc...) asparagine glycosylation is present at Asn-609.

This sequence belongs to the RxLR effector family.

The protein localises to the secreted. It localises to the host nucleus. In terms of biological role, secreted effector that acts as an elicitor that induces cell death in host plant cells. The protein is Secreted RxLR effector protein 138 of Plasmopara viticola (Downy mildew of grapevine).